We begin with the raw amino-acid sequence, 440 residues long: MNPNQILENLKKELSENEYENYIAILKFNEKQSKADFLVFNAPNELLAKFIQTKYGKKISHFYEVQSGNKASVLIQAQSAKQSSKSTKIDIAHIKAQSTILNPSFTFESFVVGDSNKYAYGACKAISQKDKLGKLYNPIFIYGPTGLGKTHLLQAVGNASLEMGKKVIYATSENFINDFTSNLKNGSLDKFHEKYRNCDVLLIDDVQFLGKTDKIQEEFFFIFNEIKNNDGQIIMTSDNPPNMLKGITERLKSRFAHGIIADITPPQLDTKIAIIRKKCEFNDINLSNDIINYIATSLGDNIREIEGIIISLNAYATILGQEITLELAKSVMKDHIKEKKENITIDDILSLVCKEFNIKPSDVKSNKKTQNIVTARRIVIYLARALTALTMPQLANYFEMKDHTAISHNVKKITEMIENDGSLKAKIEELKNKILVKSQS.

The tract at residues 1–75 (MNPNQILENL…QSGNKASVLI (75 aa)) is domain I, interacts with DnaA modulators. Positions 75-99 (IQAQSAKQSSKSTKIDIAHIKAQST) are domain II. A domain III, AAA+ region region spans residues 100–316 (ILNPSFTFES…GIIISLNAYA (217 aa)). ATP contacts are provided by Gly-146, Gly-148, Lys-149, and Thr-150. The domain IV, binds dsDNA stretch occupies residues 317–440 (TILGQEITLE…KNKILVKSQS (124 aa)).

The protein belongs to the DnaA family. In terms of assembly, oligomerizes as a right-handed, spiral filament on DNA at oriC.

The protein localises to the cytoplasm. Plays an essential role in the initiation and regulation of chromosomal replication. ATP-DnaA binds to the origin of replication (oriC) to initiate formation of the DNA replication initiation complex once per cell cycle. Binds the DnaA box (a 9 base pair repeat at the origin) and separates the double-stranded (ds)DNA. Forms a right-handed helical filament on oriC DNA; dsDNA binds to the exterior of the filament while single-stranded (ss)DNA is stabiized in the filament's interior. The ATP-DnaA-oriC complex binds and stabilizes one strand of the AT-rich DNA unwinding element (DUE), permitting loading of DNA polymerase. After initiation quickly degrades to an ADP-DnaA complex that is not apt for DNA replication. Binds acidic phospholipids. The protein is Chromosomal replication initiator protein DnaA of Campylobacter jejuni subsp. jejuni serotype O:6 (strain 81116 / NCTC 11828).